The sequence spans 173 residues: uncharacterized protein (173 aa).

4 consecutive transmembrane segments (helical) span residues L13–S35, I50–L72, N107–L129, and G139–L161.

Its subcellular location is the cell membrane. This is an uncharacterized protein from Rickettsia prowazekii (strain Madrid E).